A 308-amino-acid chain; its full sequence is Pyrroline-5-carboxylate reductase 3 (308 aa).

This sequence belongs to the pyrroline-5-carboxylate reductase family. In terms of assembly, homodecamer; composed of 5 homodimers.

The protein localises to the cytoplasm. The catalysed reaction is L-proline + NADP(+) = (S)-1-pyrroline-5-carboxylate + NADPH + 2 H(+). It carries out the reaction L-proline + NAD(+) = (S)-1-pyrroline-5-carboxylate + NADH + 2 H(+). Its pathway is amino-acid biosynthesis; L-proline biosynthesis; L-proline from L-glutamate 5-semialdehyde: step 1/1. Functionally, oxidoreductase that catalyzes the last step in proline biosynthesis, which corresponds to the reduction of pyrroline-5-carboxylate (P5C) to L-proline using NAD(P)H. Proline is synthesized from either glutamate or ornithine; both are converted to P5C, and then to proline via pyrroline-5-carboxylate reductases (PYCRs). PYCR3 is exclusively linked to the biosynthesis of proline from ornithine. The chain is Pyrroline-5-carboxylate reductase 3 from Bos taurus (Bovine).